Reading from the N-terminus, the 1226-residue chain is Methionine synthase (1226 aa).

A Hcy-binding domain is found at 7–327 (KVQIEKQLSE…EHIRQMALVV (321 aa)). Residues Cys249, Cys312, and Cys313 each contribute to the Zn(2+) site. One can recognise a Pterin-binding domain in the interval 358–619 (FINVGERTNV…VPEDLREAVE (262 aa)). Residues 652–746 (SALEWRDWPV…FINASKEVGA (95 aa)) enclose the B12-binding N-terminal domain. Methylcob(III)alamin contacts are provided by residues Glu696, 758–762 (GDVHD), His761, Ser806, Thr810, and Ala862. Positions 748 to 883 (NGKILLATVK…SDELKPSFVE (136 aa)) constitute a B12-binding domain. The AdoMet activation domain occupies 899-1226 (KQPRTKPVTL…AEKWLGPNLN (328 aa)). S-adenosyl-L-methionine is bound by residues Asp949, Arg1137, and 1192–1193 (YF).

The protein belongs to the vitamin-B12 dependent methionine synthase family. It depends on methylcob(III)alamin as a cofactor. Zn(2+) is required as a cofactor.

It carries out the reaction (6S)-5-methyl-5,6,7,8-tetrahydrofolate + L-homocysteine = (6S)-5,6,7,8-tetrahydrofolate + L-methionine. Its pathway is amino-acid biosynthesis; L-methionine biosynthesis via de novo pathway; L-methionine from L-homocysteine (MetH route): step 1/1. In terms of biological role, catalyzes the transfer of a methyl group from methyl-cobalamin to homocysteine, yielding enzyme-bound cob(I)alamin and methionine. Subsequently, remethylates the cofactor using methyltetrahydrofolate. The protein is Methionine synthase (metH) of Aliivibrio fischeri (strain ATCC 700601 / ES114) (Vibrio fischeri).